A 179-amino-acid polypeptide reads, in one-letter code: Endoribonuclease YbeY (179 aa).

Residues His-148, His-152, and His-158 each coordinate Zn(2+).

This sequence belongs to the endoribonuclease YbeY family. Zn(2+) is required as a cofactor.

The protein localises to the cytoplasm. Functionally, single strand-specific metallo-endoribonuclease involved in late-stage 70S ribosome quality control and in maturation of the 3' terminus of the 16S rRNA. This is Endoribonuclease YbeY from Prochlorococcus marinus (strain AS9601).